The following is a 65-amino-acid chain: UPF0434 protein BH12860 (65 aa).

It belongs to the UPF0434 family.

The chain is UPF0434 protein BH12860 from Bartonella henselae (strain ATCC 49882 / DSM 28221 / CCUG 30454 / Houston 1) (Rochalimaea henselae).